A 475-amino-acid polypeptide reads, in one-letter code: Chromosomal replication initiator protein DnaA (475 aa).

A domain I, interacts with DnaA modulators region spans residues 1-73 (MSDTEQERWS…LSCWQAELPD (73 aa)). The interval 73–131 (DVHRIDLTVRSAMRCAAPVREAPATDARHPERSEGRNGVELKTVATAPASANHDALGGS) is domain II. The segment at 132–354 (PLDPRLTFQS…GAINRLLAHS (223 aa)) is domain III, AAA+ region. Residues G179, G181, K182, and T183 each coordinate ATP. The segment at 355–475 (KLNAQPVTLE…VELLKRQLQE (121 aa)) is domain IV, binds dsDNA.

This sequence belongs to the DnaA family. As to quaternary structure, oligomerizes as a right-handed, spiral filament on DNA at oriC.

It is found in the cytoplasm. Functionally, plays an essential role in the initiation and regulation of chromosomal replication. ATP-DnaA binds to the origin of replication (oriC) to initiate formation of the DNA replication initiation complex once per cell cycle. Binds the DnaA box (a 9 base pair repeat at the origin) and separates the double-stranded (ds)DNA. Forms a right-handed helical filament on oriC DNA; dsDNA binds to the exterior of the filament while single-stranded (ss)DNA is stabiized in the filament's interior. The ATP-DnaA-oriC complex binds and stabilizes one strand of the AT-rich DNA unwinding element (DUE), permitting loading of DNA polymerase. After initiation quickly degrades to an ADP-DnaA complex that is not apt for DNA replication. Binds acidic phospholipids. In Nitrobacter winogradskyi (strain ATCC 25391 / DSM 10237 / CIP 104748 / NCIMB 11846 / Nb-255), this protein is Chromosomal replication initiator protein DnaA.